The chain runs to 397 residues: MKTIAVLGSTGSIGTNTLDVVRRNRHLYEVYSLVAGQNIELLTGQILEFRPKLAVVASAAVLDLLTASLQAAGLPKSEWPDLLSGDAARVAAVRAPEVDTVISAIVGVAGLEATYEAVCLGKRVGLANKEVLVSGGSLVMEAVRKFGAELLPVDSEHNGAHQCLRAGNRAQVSRLILTASGGPFRNTPVSELPFVTPGQALNHPTWKMGNRITIDCATLMNKGFEVIEACWLFDFAPRDVGVVIHPQSTVHAMIEYSDGSVLAQISATDMRMPIQYALTYPDRADAPVPKIDWAEARKWEFLPPDLEKFPLLKLAYQCQESGGSATCILNAADEIAVEAFLQGRIGFLSIHEIVQETLSRMPSRTPASVGDILEIDRESRTLARELANCRAAGTVTA.

Threonine 10, glycine 11, serine 12, isoleucine 13, glycine 36, asparagine 38, and asparagine 128 together coordinate NADPH. Position 129 (lysine 129) interacts with 1-deoxy-D-xylulose 5-phosphate. Glutamate 130 provides a ligand contact to NADPH. Aspartate 154 is a Mn(2+) binding site. 1-deoxy-D-xylulose 5-phosphate contacts are provided by serine 155, glutamate 156, serine 180, and histidine 203. Mn(2+) is bound at residue glutamate 156. Glycine 209 lines the NADPH pocket. Residues asparagine 221, lysine 222, and glutamate 225 each contribute to the 1-deoxy-D-xylulose 5-phosphate site. Glutamate 225 is a Mn(2+) binding site.

The protein belongs to the DXR family. Mg(2+) is required as a cofactor. Mn(2+) serves as cofactor.

The enzyme catalyses 2-C-methyl-D-erythritol 4-phosphate + NADP(+) = 1-deoxy-D-xylulose 5-phosphate + NADPH + H(+). It functions in the pathway isoprenoid biosynthesis; isopentenyl diphosphate biosynthesis via DXP pathway; isopentenyl diphosphate from 1-deoxy-D-xylulose 5-phosphate: step 1/6. Catalyzes the NADPH-dependent rearrangement and reduction of 1-deoxy-D-xylulose-5-phosphate (DXP) to 2-C-methyl-D-erythritol 4-phosphate (MEP). In Solibacter usitatus (strain Ellin6076), this protein is 1-deoxy-D-xylulose 5-phosphate reductoisomerase.